The chain runs to 334 residues: Flotillin-like protein FloA (334 aa).

The chain crosses the membrane as a helical span at residues 3–23 (LYLIFLIVVGVVGLVLVGLFL).

The protein belongs to the flotillin-like FloA family. In terms of assembly, homooligomerizes.

It localises to the cell membrane. The protein localises to the membrane raft. Functionally, found in functional membrane microdomains (FMM) that may be equivalent to eukaryotic membrane rafts. FMMs are highly dynamic and increase in number as cells age. Flotillins are thought to be important factors in membrane fluidity. The polypeptide is Flotillin-like protein FloA (Opitutus terrae (strain DSM 11246 / JCM 15787 / PB90-1)).